Consider the following 114-residue polypeptide: Nucleoid-associated protein slr1847 (114 aa).

The protein belongs to the YbaB/EbfC family. As to quaternary structure, homodimer.

Its subcellular location is the cytoplasm. The protein resides in the nucleoid. Binds to DNA and alters its conformation. May be involved in regulation of gene expression, nucleoid organization and DNA protection. In Synechocystis sp. (strain ATCC 27184 / PCC 6803 / Kazusa), this protein is Nucleoid-associated protein slr1847.